We begin with the raw amino-acid sequence, 296 residues long: Ribosomal RNA small subunit methyltransferase A (296 aa).

Basic and acidic residues predominate over residues 1–11; the sequence is MERSHVGRDCG. Positions 1 to 24 are disordered; the sequence is MERSHVGRDCGSRSSPRAFSVPTS. Residues 12–24 show a composition bias toward polar residues; that stretch reads SRSSPRAFSVPTS. Positions 43, 45, 70, 91, 113, and 135 each coordinate S-adenosyl-L-methionine.

Belongs to the class I-like SAM-binding methyltransferase superfamily. rRNA adenine N(6)-methyltransferase family. RsmA subfamily.

The protein resides in the cytoplasm. It catalyses the reaction adenosine(1518)/adenosine(1519) in 16S rRNA + 4 S-adenosyl-L-methionine = N(6)-dimethyladenosine(1518)/N(6)-dimethyladenosine(1519) in 16S rRNA + 4 S-adenosyl-L-homocysteine + 4 H(+). Functionally, specifically dimethylates two adjacent adenosines (A1518 and A1519) in the loop of a conserved hairpin near the 3'-end of 16S rRNA in the 30S particle. May play a critical role in biogenesis of 30S subunits. The sequence is that of Ribosomal RNA small subunit methyltransferase A from Salinibacter ruber (strain DSM 13855 / M31).